We begin with the raw amino-acid sequence, 400 residues long: Cysteine desulfurase 1 (400 aa).

Residues 71 to 72 (GT), Asn150, Gln178, and 198 to 200 (SGH) each bind pyridoxal 5'-phosphate. At Lys201 the chain carries N6-(pyridoxal phosphate)lysine. A pyridoxal 5'-phosphate-binding site is contributed by Thr236. Catalysis depends on Cys324, which acts as the Cysteine persulfide intermediate. [2Fe-2S] cluster is bound at residue Cys324.

This sequence belongs to the class-V pyridoxal-phosphate-dependent aminotransferase family. NifS/IscS subfamily. In terms of assembly, homodimer. Pyridoxal 5'-phosphate serves as cofactor.

It carries out the reaction (sulfur carrier)-H + L-cysteine = (sulfur carrier)-SH + L-alanine. Catalyzes the removal of elemental sulfur atoms from cysteine to produce alanine. Seems to participate in the biosynthesis of the nitrogenase metalloclusters by providing the inorganic sulfur required for the Fe-S core formation. The protein is Cysteine desulfurase 1 of Trichormus variabilis (strain ATCC 29413 / PCC 7937) (Anabaena variabilis).